The following is a 116-amino-acid chain: uncharacterized protein (116 aa).

This is an uncharacterized protein from Acidianus filamentous virus 2 (isolate Italy/Pozzuoli) (AFV-2).